The primary structure comprises 195 residues: CASP-like protein Os03g0196400 (195 aa).

The Cytoplasmic portion of the chain corresponds to 1–38; the sequence is MRQQQAGGVGDGVSPGNVPVCYYGPGGRVPSSLERRAR. The helical transmembrane segment at 39–59 threads the bilayer; the sequence is AAEVLLRCAACGLAVLAAALL. At 60–81 the chain is on the extracellular side; sequence GADRQTRVFFSIQKVARYTDMQ. A helical membrane pass occupies residues 82 to 102; the sequence is SLVLLVIANGMAACYSLIQCA. Residues 103-104 are Cytoplasmic-facing; the sequence is RC. Residues 105–125 traverse the membrane as a helical segment; that stretch reads LVMAYIVISAVAAAMEAALIG. The Extracellular portion of the chain corresponds to 126-150; the sequence is KYGQPEFQWMKTCHLYKRFCAQAGG. A helical membrane pass occupies residues 151-171; sequence GVACAIAASVNMVGVALISAF. Residues 172–195 lie on the Cytoplasmic side of the membrane; sequence NLFRLYGNSNGGGKATTTTMAGGK.

This sequence belongs to the Casparian strip membrane proteins (CASP) family. As to quaternary structure, homodimer and heterodimers.

It localises to the cell membrane. This is CASP-like protein Os03g0196400 from Oryza sativa subsp. japonica (Rice).